The primary structure comprises 1583 residues: Protein mesh (1583 aa).

Positions 1–21 are cleaved as a signal peptide; the sequence is MGVKIKLVLAVVLILSANVLG. Residues 22–1182 are Extracellular-facing; the sequence is QDEIVNDTES…EFSQRALFLT (1161 aa). The 156-residue stretch at 260–415 folds into the NIDO domain; it reads GIYFRLDRDL…GRHIFRIDEN (156 aa). The AMOP domain occupies 647 to 798; the sequence is GQRWSNSMCN…VGCETFRFER (152 aa). In terms of domain architecture, VWFD spans 811–1019; that stretch reads GVAGIFGDPH…HWQLTDREQR (209 aa). The Sushi domain maps to 1110–1170; sequence ISCGILETPR…PDYGYTECLR (61 aa). 2 disulfide bridges follow: Cys1112–Cys1152 and Cys1138–Cys1168. Residues 1183-1203 traverse the membrane as a helical segment; sequence WGVIVAVILPLGLLICLLWFW. Residues 1204-1472 are Cytoplasmic-facing; sequence CWHKPRSEGK…QEYSSRTLGA (269 aa). Polar residues predominate over residues 1232 to 1250; sequence LRSSSMGNITDTMKSSTIP. The tract at residues 1232–1448 is disordered; that stretch reads LRSSSMGNIT…IPEAPKSAPV (217 aa). The span at 1291-1300 shows a compositional bias: basic and acidic residues; it reads GKSDSGKSDK. The span at 1405 to 1416 shows a compositional bias: polar residues; sequence PIPSQYSPTYSE. The helical transmembrane segment at 1473 to 1493 threads the bilayer; the sequence is TWGIISAVMLPIIIILICVAW. Residues 1494-1583 lie on the Extracellular side of the membrane; sequence RILQRRKAEE…RQWGGETEIN (90 aa). Residues 1521–1539 are compositionally biased toward basic and acidic residues; sequence DSVKVTSDDESIPYKKDVT. The tract at residues 1521–1583 is disordered; it reads DSVKVTSDDE…RQWGGETEIN (63 aa).

As to expression, in fifth instar larvae, expressed in midgut epithelial cells (at protein level).

It localises to the membrane. The protein resides in the cell junction. Its subcellular location is the septate junction. It is found in the lateral cell membrane. In terms of biological role, may be required for the proper organization of smooth septate junctions and for the barrier function of the midgut epithelium. In Bombyx mori (Silk moth), this protein is Protein mesh.